Reading from the N-terminus, the 147-residue chain is Large ribosomal subunit protein uL16 (147 aa).

The protein belongs to the universal ribosomal protein uL16 family. Part of the 50S ribosomal subunit.

In terms of biological role, binds 23S rRNA and is also seen to make contacts with the A and possibly P site tRNAs. This chain is Large ribosomal subunit protein uL16, found in Clostridium botulinum (strain ATCC 19397 / Type A).